A 196-amino-acid chain; its full sequence is Molybdenum cofactor guanylyltransferase (196 aa).

Residues 10–12 (LAG), Lys-23, Asn-51, Asp-69, and Asp-99 contribute to the GTP site. Mg(2+) is bound at residue Asp-99.

The protein belongs to the MobA family. As to quaternary structure, monomer. The cofactor is Mg(2+).

It localises to the cytoplasm. It catalyses the reaction Mo-molybdopterin + GTP + H(+) = Mo-molybdopterin guanine dinucleotide + diphosphate. In terms of biological role, transfers a GMP moiety from GTP to Mo-molybdopterin (Mo-MPT) cofactor (Moco or molybdenum cofactor) to form Mo-molybdopterin guanine dinucleotide (Mo-MGD) cofactor. This Shewanella sediminis (strain HAW-EB3) protein is Molybdenum cofactor guanylyltransferase.